We begin with the raw amino-acid sequence, 285 residues long: MRSARSTALNRGEQRAVRYYSHMKLNMAEEEDYMSDSFINVQEDIRPGLPMLRQIREARRKEEKQQEANLKNRQKSLKEEEQERRDIGLKNALGCENKGFALLQKMGYKSGQALGKSGGGIVEPIPLNIKTGKSGIGHEASLKRKAEEKLESYRKKIHMKNQAEEKAAEQFRMRLKNKQDEMKLEGDLRRSQRACQQLDVQKNIQVPREAWYWLRLEEETEEDEEEKEQDEDEYKSEDLSVLEKLQILTSYLREEHLYCIWCGTAYEDKEDLSSNCPGPTSADHD.

The stretch at Met51–Ile87 forms a coiled coil. The tract at residues Arg59–Arg84 is disordered. Positions Cys95–Ser141 constitute a G-patch domain. Ser141 bears the Phosphoserine mark. Lys149 carries the N6-acetyllysine modification. Acidic residues predominate over residues Glu218–Lys235. A disordered region spans residues Glu218–Glu237.

Belongs to the GPATCH11 family.

It is found in the chromosome. The protein resides in the centromere. It localises to the kinetochore. This Homo sapiens (Human) protein is G patch domain-containing protein 11 (GPATCH11).